Consider the following 180-residue polypeptide: Guanosine-3',5'-bis(diphosphate) 3'-pyrophosphohydrolase MESH1 (180 aa).

In terms of domain architecture, HD spans 33–128; that stretch reads YINHPIGVAR…VKLADKLYNL (96 aa). Mn(2+)-binding residues include histidine 36, histidine 62, and aspartate 63. Active-site nucleophile residues include glutamate 66 and aspartate 67. Aspartate 123 contributes to the Mn(2+) binding site.

This sequence belongs to the MESH1 family. It depends on Mn(2+) as a cofactor.

The enzyme catalyses guanosine 3',5'-bis(diphosphate) + H2O = GDP + diphosphate + H(+). Its function is as follows. ppGpp hydrolyzing enzyme involved in starvation response. The protein is Guanosine-3',5'-bis(diphosphate) 3'-pyrophosphohydrolase MESH1 (hddc3) of Danio rerio (Zebrafish).